The following is a 2278-amino-acid chain: Protein Ycf2 (2278 aa).

The protein belongs to the Ycf2 family.

Its subcellular location is the plastid. It localises to the chloroplast stroma. It is found in the chromoplast stroma. In terms of biological role, probable ATPase of unknown function. Its presence in a non-photosynthetic plant (Epifagus virginiana) and experiments in tobacco indicate that it has an essential function which is probably not related to photosynthesis. In Solanum lycopersicum (Tomato), this protein is Protein Ycf2 (ycf2-A).